The primary structure comprises 209 residues: Immunoglobulin lambda-like polypeptide 1 (209 aa).

Residues 1 to 30 (MKLRVGQTLGTIPRQCEVLLLLLLLGLVDG) form the signal peptide. A j region region spans residues 93–104 (VFGGGTQLTILG). The interval 105-209 (QPKSDPLVTL…EKSVSPAECS (105 aa)) is c region. The region spanning 110-204 (PLVTLFLPSL…EGNTVEKSVS (95 aa)) is the Ig-like C1-type domain. An intrachain disulfide couples Cys-131 to Cys-190.

As to quaternary structure, interacts with VPREB1A. Interacts with SYNV1/HRD1 (via N-terminus); this interaction leads to increased IGLL1 ubiquitination and degradation in pre-B cells, possibly through a lysosomal, not proteasomal, pathway. Selectively expressed in pre-B lymphocytes.

It localises to the endoplasmic reticulum. Its subcellular location is the secreted. Its function is as follows. Critical for B-cell development. This is Immunoglobulin lambda-like polypeptide 1 (Igll1) from Mus musculus (Mouse).